The following is a 218-amino-acid chain: Cytochrome P450 3A19 (218 aa).

Cys-153 lines the heme pocket.

This sequence belongs to the cytochrome P450 family. The cofactor is heme.

The protein resides in the endoplasmic reticulum membrane. It is found in the microsome membrane. The enzyme catalyses an organic molecule + reduced [NADPH--hemoprotein reductase] + O2 = an alcohol + oxidized [NADPH--hemoprotein reductase] + H2O + H(+). Its function is as follows. Cytochromes P450 are a group of heme-thiolate monooxygenases. In liver microsomes, this enzyme is involved in an NADPH-dependent electron transport pathway. It oxidizes a variety of structurally unrelated compounds, including steroids, fatty acids, and xenobiotics. This is Cytochrome P450 3A19 (CYP3A19) from Capra hircus aegagrus (Wild goat).